Consider the following 148-residue polypeptide: Large ribosomal subunit protein bL9 (148 aa).

Belongs to the bacterial ribosomal protein bL9 family.

Functionally, binds to the 23S rRNA. This chain is Large ribosomal subunit protein bL9, found in Listeria monocytogenes serotype 4b (strain CLIP80459).